The chain runs to 609 residues: Wee1-like protein kinase (609 aa).

Residues 1-10 (MAFRQSEHEM) are compositionally biased toward basic and acidic residues. 2 disordered regions span residues 1–88 (MAFR…SMSP) and 147–166 (PLHN…PFTP). Residues serine 23, serine 25, and serine 27 each carry the phosphoserine modification. A compositionally biased stretch (basic and acidic residues) spans 37–48 (RFADDDFDKDTP). Threonine 47 is modified (phosphothreonine). Serine 52 bears the Phosphoserine mark. A compositionally biased stretch (polar residues) spans 153–165 (LPTQDTANVNPFT). Threonine 165 is modified (phosphothreonine). Serine 168 is modified (phosphoserine). The Protein kinase domain maps to 239-517 (FMQVNVIGVG…SQSIFSHPIL (279 aa)). ATP is bound by residues 245 to 253 (IGVGEFGVV) and lysine 268. Residue aspartate 361 is the Proton acceptor of the active site. Mg(2+) contacts are provided by asparagine 366 and aspartate 412.

Belongs to the protein kinase superfamily. Ser/Thr protein kinase family. WEE1 subfamily. Requires Mg(2+) as cofactor. In terms of processing, phosphorylated during M and G1 phases. Expressed in embryos; expression remains high in the proliferating cells of the central nervous system well after cells in the rest of the embryo have ceased dividing.

The protein resides in the nucleus. It catalyses the reaction L-tyrosyl-[protein] + ATP = O-phospho-L-tyrosyl-[protein] + ADP + H(+). Its activity is regulated as follows. Negatively regulated by phosphorylation in the M-phase. Functionally, acts as a negative regulator of entry into mitosis (G2 to M transition). This kinase specifically phosphorylates and inactivates cyclin B1-complexed CDC2. This Drosophila melanogaster (Fruit fly) protein is Wee1-like protein kinase.